A 438-amino-acid chain; its full sequence is sn-glycerol-3-phosphate-binding periplasmic protein UgpB (438 aa).

The signal sequence occupies residues 1–23 (MKPLHYTASALALGLALMGNAQA). The sn-glycerol 3-phosphate site is built by tyrosine 65, glutamate 89, serine 144, serine 270, glycine 307, tyrosine 346, and arginine 397.

The protein belongs to the bacterial solute-binding protein 1 family. In terms of assembly, the complex is composed of two ATP-binding proteins (UgpC), two transmembrane proteins (UgpA and UgpE) and a solute-binding protein (UgpB).

It localises to the periplasm. In terms of biological role, part of the ABC transporter complex UgpBAEC involved in sn-glycerol-3-phosphate (G3P) import. Binds G3P. The sequence is that of sn-glycerol-3-phosphate-binding periplasmic protein UgpB (ugpB) from Shigella flexneri serotype 5b (strain 8401).